Here is a 230-residue protein sequence, read N- to C-terminus: Large ribosomal subunit protein uL1 (230 aa).

It belongs to the universal ribosomal protein uL1 family. Part of the 50S ribosomal subunit.

Functionally, binds directly to 23S rRNA. The L1 stalk is quite mobile in the ribosome, and is involved in E site tRNA release. Protein L1 is also a translational repressor protein, it controls the translation of the L11 operon by binding to its mRNA. This Chromohalobacter salexigens (strain ATCC BAA-138 / DSM 3043 / CIP 106854 / NCIMB 13768 / 1H11) protein is Large ribosomal subunit protein uL1.